We begin with the raw amino-acid sequence, 199 residues long: Urease accessory protein UreG (199 aa).

8–15 (GPVGSGKT) contributes to the GTP binding site.

The protein belongs to the SIMIBI class G3E GTPase family. UreG subfamily. In terms of assembly, homodimer. UreH, UreF and UreG form a complex that acts as a GTP-hydrolysis-dependent molecular chaperone, activating the urease apoprotein by helping to assemble the nickel containing metallocenter of UreC. The UreE protein probably delivers the nickel.

It localises to the cytoplasm. Facilitates the functional incorporation of the urease nickel metallocenter. This process requires GTP hydrolysis, probably effectuated by UreG. This is Urease accessory protein UreG from Helicobacter pylori (strain J99 / ATCC 700824) (Campylobacter pylori J99).